The primary structure comprises 152 residues: Protein eva-1 homolog A (152 aa).

The segment at 1–60 (MRLPLSHSPEHVEMALLSNILAAYSFVSENPERAALYFVSGVCIGLVLTLAALVIRISCH) is necessary for the localization and biological activity. A helical transmembrane segment spans residues 35 to 55 (ALYFVSGVCIGLVLTLAALVI). Residues 70-97 (KFLQDRESSSDSSDSEDGSEDTVSDLSV) form a disordered region. The span at 82-92 (SDSEDGSEDTV) shows a compositional bias: acidic residues. At Thr106 the chain carries Phosphothreonine. Residue Ser114 is modified to Phosphoserine; by FAM20C.

Belongs to the EVA1 family. In terms of tissue distribution, expressed in lung, kidney, liver, pancreas, placenta, but not in heart and skeletal muscle.

It is found in the endoplasmic reticulum membrane. Its subcellular location is the lysosome membrane. Functionally, acts as a regulator of programmed cell death, mediating both autophagy and apoptosis. This chain is Protein eva-1 homolog A (EVA1A), found in Homo sapiens (Human).